Consider the following 262-residue polypeptide: MASSVLLVLSLFLVLLLTQASAELFFNFQTFNAANLILQGNAVSSKGHLLLTNVTHNGEPSVASSGRALYSAPIQIRDSTGNASSTPTSHSYTLQQIFQNVTDDPAWLFALVPVDSQPKKKGRLLGLFNKSENDINALTVAVEFDTCHNLDWDKNSIAVNLGIGSVPWNFRDYDGQNADVLITYDSSTKFLAVSLFYPITGKRNNVSANVELEKVLDDWVSVGFSATSGAYETHDVLSSSFASKLSSLDECPTGENLLNKIL.

The first 21 residues, 1–21 (MASSVLLVLSLFLVLLLTQAS), serve as a signal peptide directing secretion. 5 N-linked (GlcNAc...) asparagine glycosylation sites follow: asparagine 53, asparagine 82, asparagine 100, asparagine 129, and asparagine 205.

The protein belongs to the leguminous lectin family.

Functionally, this metalloglycoprotein, containing Ca(2+), Mn(2+), binds glycoconjugates containing terminal non-reducing alpha-D-GalNAc residues. This is Lectin from Phaseolus lunatus (Lima bean).